The primary structure comprises 445 residues: Xylose isomerase (445 aa).

Residues His107 and Asp110 contribute to the active site. Residues Glu238, Glu274, His277, Asp302, Asp313, Asp315, and Asp345 each coordinate Mg(2+).

The protein belongs to the xylose isomerase family. In terms of assembly, homotetramer. Requires Mg(2+) as cofactor.

Its subcellular location is the cytoplasm. It catalyses the reaction alpha-D-xylose = alpha-D-xylulofuranose. This chain is Xylose isomerase (xylA), found in Priestia megaterium (strain DSM 319 / IMG 1521) (Bacillus megaterium).